A 204-amino-acid chain; its full sequence is Probable nicotinate-nucleotide adenylyltransferase (204 aa).

It belongs to the NadD family.

The catalysed reaction is nicotinate beta-D-ribonucleotide + ATP + H(+) = deamido-NAD(+) + diphosphate. It functions in the pathway cofactor biosynthesis; NAD(+) biosynthesis; deamido-NAD(+) from nicotinate D-ribonucleotide: step 1/1. Functionally, catalyzes the reversible adenylation of nicotinate mononucleotide (NaMN) to nicotinic acid adenine dinucleotide (NaAD). The protein is Probable nicotinate-nucleotide adenylyltransferase of Dehalococcoides mccartyi (strain ATCC BAA-2266 / KCTC 15142 / 195) (Dehalococcoides ethenogenes (strain 195)).